The chain runs to 860 residues: Leucine--tRNA ligase (860 aa).

The 'HIGH' region motif lies at 42–52 (PYPSGRLHMGH). A 'KMSKS' region motif is present at residues 619 to 623 (KMSKS). ATP is bound at residue K622.

The protein belongs to the class-I aminoacyl-tRNA synthetase family.

Its subcellular location is the cytoplasm. The enzyme catalyses tRNA(Leu) + L-leucine + ATP = L-leucyl-tRNA(Leu) + AMP + diphosphate. The sequence is that of Leucine--tRNA ligase from Escherichia coli (strain SE11).